An 829-amino-acid chain; its full sequence is Periplasmic nitrate reductase (829 aa).

The segment at residues Met-1 to Ala-36 is a signal peptide (tat-type signal). Positions Leu-39–Asp-95 constitute a 4Fe-4S Mo/W bis-MGD-type domain. Residues Cys-46, Cys-49, Cys-53, and Cys-81 each contribute to the [4Fe-4S] cluster site. Mo-bis(molybdopterin guanine dinucleotide) contacts are provided by residues Lys-83, Gln-150, Asn-175, Cys-179, Trp-212–Met-219, Ser-243–His-247, Gln-262–Asp-264, Met-373, Gln-377, Asn-483, Ser-509–Asp-510, Lys-532, Asp-559, and Thr-719–Ser-728. Trp-795 is a binding site for substrate. Residues Asn-803 and Lys-820 each contribute to the Mo-bis(molybdopterin guanine dinucleotide) site.

Belongs to the prokaryotic molybdopterin-containing oxidoreductase family. NasA/NapA/NarB subfamily. Component of the periplasmic nitrate reductase NapAB complex composed of NapA and NapB. [4Fe-4S] cluster is required as a cofactor. Requires Mo-bis(molybdopterin guanine dinucleotide) as cofactor. Post-translationally, predicted to be exported by the Tat system. The position of the signal peptide cleavage has not been experimentally proven.

It localises to the periplasm. It carries out the reaction 2 Fe(II)-[cytochrome] + nitrate + 2 H(+) = 2 Fe(III)-[cytochrome] + nitrite + H2O. Functionally, catalytic subunit of the periplasmic nitrate reductase complex NapAB. Receives electrons from NapB and catalyzes the reduction of nitrate to nitrite. The polypeptide is Periplasmic nitrate reductase (Bordetella bronchiseptica (strain ATCC BAA-588 / NCTC 13252 / RB50) (Alcaligenes bronchisepticus)).